The primary structure comprises 372 residues: Hydrogenase-1 small chain (372 aa).

The tat-type signal signal peptide spans 1–45 (MNNEETFYQAMRRQGVTRRSFLKYCSLAATSLGLGAGMAPKIAWA). Residues 46 to 325 (LENKPRIPVV…PQMGTHSTAD (280 aa)) lie on the Periplasmic side of the membrane. [4Fe-4S] cluster is bound by residues Cys62, Cys65, Cys160, Cys194, His232, Cys235, Cys260, and Cys266. [3Fe-4S] cluster contacts are provided by Cys275, Cys294, and Cys297. Residues 326-346 (TVGLTALGVVAAAVGVHAVAS) traverse the membrane as a helical segment. Residues 346–372 (SSVDQRRRHNQQPTETEHQPGNEDKQA) form a disordered region. Over 347–372 (SVDQRRRHNQQPTETEHQPGNEDKQA) the chain is Cytoplasmic. The span at 360–372 (ETEHQPGNEDKQA) shows a compositional bias: basic and acidic residues.

This sequence belongs to the [NiFe]/[NiFeSe] hydrogenase small subunit family. In terms of assembly, heterodimer of a large and a small subunit. It depends on [4Fe-4S] cluster as a cofactor. [3Fe-4S] cluster serves as cofactor. Post-translationally, predicted to be exported by the Tat system. The position of the signal peptide cleavage has not been experimentally proven.

The protein localises to the cell inner membrane. It carries out the reaction H2 + A = AH2. Its function is as follows. This is one of three S.flexneri hydrogenases synthesized in response to different physiological conditions. HYD1 is believed to have a role in hydrogen cycling during fermentative growth. This is Hydrogenase-1 small chain (hyaA) from Shigella flexneri.